The chain runs to 49 residues: Large ribosomal subunit protein bL33 (49 aa).

This sequence belongs to the bacterial ribosomal protein bL33 family.

This is Large ribosomal subunit protein bL33 from Streptococcus pyogenes serotype M18 (strain MGAS8232).